Here is a 997-residue protein sequence, read N- to C-terminus: Glutamate [NMDA] receptor subunit 1 (997 aa).

Positions 1-26 (MAVAGFVFCRPLFGLAIVLLVAPIDA) are cleaved as a signal peptide. Over 27 to 573 (AQRHTASDNP…TLVSFLQPFS (547 aa)) the chain is Extracellular. Asn-258, Asn-314, Asn-345, Asn-397, Asn-454, Asn-481, and Asn-501 each carry an N-linked (GlcNAc...) asparagine glycan. Residues 530–532 (PLT) and Arg-537 each bind glycine. A helical transmembrane segment spans residues 574–594 (NTLWILVMVSVHVVALVLYLL). Residues 595 to 651 (DRFSPFGRFKLSHSDSNEEKALNLSSAVWFAWGVLLNSGIGEGTPRSFSARVLGMVW) are Cytoplasmic-facing. A helical membrane pass occupies residues 652–672 (AGFAMIIVASYTANLAAFLVL). The Extracellular portion of the chain corresponds to 673–831 (ERPKTKLSGI…KTPNTLGLKN (159 aa)). A glycan (N-linked (GlcNAc...) asparagine) is linked at Asn-693. 2 residues coordinate glycine: Ser-703 and Asp-747. A helical membrane pass occupies residues 832–852 (MAGVFILVGVGIAGGVGLIII). Topologically, residues 853-997 (EVIYKKHQVK…YTSDVSHLVV (145 aa)) are cytoplasmic. The segment at 970 to 997 (LGKTRPQQSVLPPRYSPGYTSDVSHLVV) is disordered. Residues 987–997 (GYTSDVSHLVV) are compositionally biased toward polar residues.

This sequence belongs to the glutamate-gated ion channel (TC 1.A.10.1) family. As to quaternary structure, forms a heteromeric NMDA channel with Nmdar2.

The protein resides in the cell membrane. It localises to the postsynaptic cell membrane. It is found in the postsynaptic density. In terms of biological role, NMDA receptor subtype of glutamate-gated ion channels with high calcium permeability and voltage-dependent sensitivity to magnesium. Mediated by glycine. This protein plays a key role in synaptic plasticity, synaptogenesis, excitotoxicity, memory acquisition and learning. It mediates neuronal functions in glutamate neurotransmission. Is involved in the cell surface targeting of NMDA receptors. Plays a role in associative learning and in long-term memory consolidation. This chain is Glutamate [NMDA] receptor subunit 1, found in Drosophila sechellia (Fruit fly).